The chain runs to 132 residues: Phosphoribosyl-ATP pyrophosphatase (132 aa).

The protein belongs to the PRA-PH family.

Its subcellular location is the cytoplasm. The enzyme catalyses 1-(5-phospho-beta-D-ribosyl)-ATP + H2O = 1-(5-phospho-beta-D-ribosyl)-5'-AMP + diphosphate + H(+). Its pathway is amino-acid biosynthesis; L-histidine biosynthesis; L-histidine from 5-phospho-alpha-D-ribose 1-diphosphate: step 2/9. The protein is Phosphoribosyl-ATP pyrophosphatase of Acidovorax sp. (strain JS42).